Here is a 313-residue protein sequence, read N- to C-terminus: 3'-5' exoribonuclease YhaM (313 aa).

The segment at residues 22 to 90 (SSVKGTASNG…QLKIRQIRQA (69 aa)) is a DNA-binding region (OB). In terms of domain architecture, HD spans 163 to 279 (HVVSMLRLAK…LHQIDLMDAS (117 aa)).

It belongs to the YhaM family.

Functionally, shows a 3'-5' exoribonuclease activity. The polypeptide is 3'-5' exoribonuclease YhaM (Listeria monocytogenes serovar 1/2a (strain ATCC BAA-679 / EGD-e)).